We begin with the raw amino-acid sequence, 307 residues long: tRNA pseudouridine synthase B (307 aa).

Residue D38 is the Nucleophile of the active site.

It belongs to the pseudouridine synthase TruB family. Type 1 subfamily.

It carries out the reaction uridine(55) in tRNA = pseudouridine(55) in tRNA. Responsible for synthesis of pseudouridine from uracil-55 in the psi GC loop of transfer RNAs. The sequence is that of tRNA pseudouridine synthase B from Bacillus cereus (strain ATCC 10987 / NRS 248).